The primary structure comprises 1040 residues: V(D)J recombination-activating protein 1 (1040 aa).

A compositionally biased stretch (basic and acidic residues) spans 39–53 (EKAPEEAQKEKDSSE). The interval 39–71 (EKAPEEAQKEKDSSEGKPYLEQSPVVPEKPGGQ) is disordered. Lys-233 participates in a covalent cross-link: Glycyl lysine isopeptide (Lys-Gly) (interchain with G-Cter in ubiquitin). Zn(2+) contacts are provided by Cys-266, His-270, Cys-290, Cys-293, His-295, Cys-305, His-307, Cys-310, Cys-313, Cys-325, Cys-328, Cys-355, Cys-360, His-372, and His-376. The RING-type zinc-finger motif lies at 290–329 (CQICEHILADPVETSCKHLFCRICILRCLKVMGSYCPSCR). The RAG1-type zinc finger occupies 351–380 (LMVKCPAQDCNEEVSLEKYNHHVSSHKESK). Positions 389 to 456 (GGRPRQHLLS…QADELEAIMQ (68 aa)) form a DNA-binding region, NBD. Residues Asp-600, Asp-708, and Glu-962 each contribute to the a divalent metal cation site.

This sequence belongs to the RAG1 family. Homodimer. Component of the RAG complex composed of core components RAG1 and RAG2, and associated component HMGB1 or HMGB2. Interacts with DCAF1, leading to recruitment of the CUL4A-RBX1-DDB1-DCAF1/VPRBP complex to ubiquitinate proteins and limit error-prone repair during V(D)J recombination. Mg(2+) serves as cofactor. Requires Mn(2+) as cofactor. Post-translationally, autoubiquitinated in the presence of CDC34/UBCH3. Maturing lymphoid cells and central nervous system.

It localises to the nucleus. The catalysed reaction is S-ubiquitinyl-[E2 ubiquitin-conjugating enzyme]-L-cysteine + [acceptor protein]-L-lysine = [E2 ubiquitin-conjugating enzyme]-L-cysteine + N(6)-ubiquitinyl-[acceptor protein]-L-lysine.. In terms of biological role, catalytic component of the RAG complex, a multiprotein complex that mediates the DNA cleavage phase during V(D)J recombination. V(D)J recombination assembles a diverse repertoire of immunoglobulin and T-cell receptor genes in developing B and T-lymphocytes through rearrangement of different V (variable), in some cases D (diversity), and J (joining) gene segments. In the RAG complex, RAG1 mediates the DNA-binding to the conserved recombination signal sequences (RSS) and catalyzes the DNA cleavage activities by introducing a double-strand break between the RSS and the adjacent coding segment. RAG2 is not a catalytic component but is required for all known catalytic activities. DNA cleavage occurs in 2 steps: a first nick is introduced in the top strand immediately upstream of the heptamer, generating a 3'-hydroxyl group that can attack the phosphodiester bond on the opposite strand in a direct transesterification reaction, thereby creating 4 DNA ends: 2 hairpin coding ends and 2 blunt, 5'-phosphorylated ends. The chromatin structure plays an essential role in the V(D)J recombination reactions and the presence of histone H3 trimethylated at 'Lys-4' (H3K4me3) stimulates both the nicking and haipinning steps. The RAG complex also plays a role in pre-B cell allelic exclusion, a process leading to expression of a single immunoglobulin heavy chain allele to enforce clonality and monospecific recognition by the B-cell antigen receptor (BCR) expressed on individual B-lymphocytes. The introduction of DNA breaks by the RAG complex on one immunoglobulin allele induces ATM-dependent repositioning of the other allele to pericentromeric heterochromatin, preventing accessibility to the RAG complex and recombination of the second allele. In addition to its endonuclease activity, RAG1 also acts as an E3 ubiquitin-protein ligase that mediates monoubiquitination of histone H3. Histone H3 monoubiquitination is required for the joining step of V(D)J recombination. Mediates polyubiquitination of KPNA1. The polypeptide is V(D)J recombination-activating protein 1 (Rag1) (Mus musculus (Mouse)).